Here is a 956-residue protein sequence, read N- to C-terminus: uncharacterized protein (956 aa).

A coiled-coil region spans residues 918–942 (NSINEAIEKLNEAADAYQAIIDQQK).

This is an uncharacterized protein from Acanthamoeba polyphaga (Amoeba).